The chain runs to 200 residues: Cation channel sperm-associated auxiliary subunit zeta (200 aa).

Residues 1–29 (MEEKPSKVSLKSSDRQGSDEESVHSDTRD) are compositionally biased toward basic and acidic residues. Disordered stretches follow at residues 1–31 (MEEK…RDLW) and 58–78 (NISK…EGYK).

Component of the CatSper complex or CatSpermasome composed of the core pore-forming members CATSPER1, CATSPER2, CATSPER3 and CATSPER4 as well as auxiliary members CATSPERB, CATSPERG, CATSPERD, CATSPERE, CATSPERZ, C2CD6/CATSPERT, TMEM249, TMEM262 and EFCAB9. HSPA1 may be an additional auxiliary complex member. The core complex members CATSPER1, CATSPER2, CATSPER3 and CATSPER4 form a heterotetrameric channel. The auxiliary CATSPERB, CATSPERG, CATSPERD and CATSPERE subunits form a pavilion-like structure over the pore which stabilizes the complex through interactions with CATSPER4, CATSPER3, CATSPER1 and CATSPER2 respectively. TMEM262/CATSPERH interacts with CATSPERB, further stabilizing the complex. C2CD6/CATSPERT interacts at least with CATSPERD and is required for targeting the CatSper complex in the flagellar membrane. Interacts with EFCAB9; the interaction is direct, Ca(2+)-dependent and connects EFCAB9 with the CatSper complex. Dissociates from EFCAB9 at elevated pH.

The protein resides in the cell projection. It is found in the cilium. The protein localises to the flagellum membrane. Auxiliary component of the CatSper complex, a complex involved in sperm cell hyperactivation. Sperm cell hyperactivation is needed for sperm motility which is essential late in the preparation of sperm for fertilization. Required for a distribution of the CatSper complex in linear quadrilateral nanodomains along the flagellum, maximizing fertilization inside the mammalian female reproductive tract. Together with EFCAB9, associates with the CatSper channel pore and is required for the two-row structure of each single CatSper channel. The sequence is that of Cation channel sperm-associated auxiliary subunit zeta from Homo sapiens (Human).